Here is a 173-residue protein sequence, read N- to C-terminus: PTS system glucose-specific EIIA component (173 aa).

One can recognise a PTS EIIA type-1 domain in the interval 40–144 (DPTFAQKMMG…STVTPVVVTN (105 aa)). Histidine 77 and histidine 92 together coordinate Zn(2+). Histidine 92 acts as the Tele-phosphohistidine intermediate; for EIIA activity in catalysis. Histidine 92 carries the post-translational modification Phosphohistidine; by HPr.

In terms of assembly, heterodimer with glycerol kinase (glpk). Zn(2+) is required as a cofactor.

It localises to the cytoplasm. Functionally, the phosphoenolpyruvate-dependent sugar phosphotransferase system (sugar PTS), a major carbohydrate active transport system, catalyzes the phosphorylation of incoming sugar substrates concomitantly with their translocation across the cell membrane. The enzyme II complex composed of PtsG and Crr is involved in glucose transport. The chain is PTS system glucose-specific EIIA component (crr) from Halalkalibacterium halodurans (strain ATCC BAA-125 / DSM 18197 / FERM 7344 / JCM 9153 / C-125) (Bacillus halodurans).